A 311-amino-acid chain; its full sequence is tRNA dimethylallyltransferase (311 aa).

13–20 (GPTASGKT) serves as a coordination point for ATP. 15–20 (TASGKT) contacts substrate. Interaction with substrate tRNA regions lie at residues 38-41 (DSMQ) and 166-170 (QRVLR).

The protein belongs to the IPP transferase family. Monomer. Mg(2+) is required as a cofactor.

The enzyme catalyses adenosine(37) in tRNA + dimethylallyl diphosphate = N(6)-dimethylallyladenosine(37) in tRNA + diphosphate. Functionally, catalyzes the transfer of a dimethylallyl group onto the adenine at position 37 in tRNAs that read codons beginning with uridine, leading to the formation of N6-(dimethylallyl)adenosine (i(6)A). This chain is tRNA dimethylallyltransferase, found in Staphylococcus aureus (strain MRSA252).